Here is a 124-residue protein sequence, read N- to C-terminus: Small ribosomal subunit protein uS13 (124 aa).

The tract at residues 99–124 (RGQRTRTNARTRKGPRKTVGVMRKKS) is disordered. Residues 101–124 (QRTRTNARTRKGPRKTVGVMRKKS) show a composition bias toward basic residues.

This sequence belongs to the universal ribosomal protein uS13 family. As to quaternary structure, part of the 30S ribosomal subunit. Forms a loose heterodimer with protein S19. Forms two bridges to the 50S subunit in the 70S ribosome.

Its function is as follows. Located at the top of the head of the 30S subunit, it contacts several helices of the 16S rRNA. In the 70S ribosome it contacts the 23S rRNA (bridge B1a) and protein L5 of the 50S subunit (bridge B1b), connecting the 2 subunits; these bridges are implicated in subunit movement. Contacts the tRNAs in the A and P-sites. This Caldicellulosiruptor bescii (strain ATCC BAA-1888 / DSM 6725 / KCTC 15123 / Z-1320) (Anaerocellum thermophilum) protein is Small ribosomal subunit protein uS13.